Here is an 867-residue protein sequence, read N- to C-terminus: Schizokinen transporter SchT (867 aa).

The disordered stretch occupies residues His40–Ala62. Polar residues predominate over residues Glu46 to Ala62. The TonB box motif lies at Ile185–Thr192. The TBDR plug domain maps to Pro197–Arg307. Residues Lys313–Trp867 enclose the TBDR beta-barrel domain. The TonB C-terminal box signature appears at Ala850–Trp867.

It belongs to the TonB-dependent receptor family.

It is found in the cell outer membrane. Functionally, involved in the TonB-dependent uptake of iron in complex with schizokinen, a dihydroxamate-type siderophore. This Nostoc sp. (strain PCC 7120 / SAG 25.82 / UTEX 2576) protein is Schizokinen transporter SchT.